Reading from the N-terminus, the 129-residue chain is Large ribosomal subunit protein uL22 (129 aa).

This sequence belongs to the universal ribosomal protein uL22 family. As to quaternary structure, part of the 50S ribosomal subunit.

Its function is as follows. This protein binds specifically to 23S rRNA; its binding is stimulated by other ribosomal proteins, e.g. L4, L17, and L20. It is important during the early stages of 50S assembly. It makes multiple contacts with different domains of the 23S rRNA in the assembled 50S subunit and ribosome. The globular domain of the protein is located near the polypeptide exit tunnel on the outside of the subunit, while an extended beta-hairpin is found that lines the wall of the exit tunnel in the center of the 70S ribosome. The sequence is that of Large ribosomal subunit protein uL22 from Brucella suis biovar 1 (strain 1330).